Consider the following 452-residue polypeptide: Exodeoxyribonuclease 7 large subunit (452 aa).

It belongs to the XseA family. Heterooligomer composed of large and small subunits.

The protein localises to the cytoplasm. It carries out the reaction Exonucleolytic cleavage in either 5'- to 3'- or 3'- to 5'-direction to yield nucleoside 5'-phosphates.. In terms of biological role, bidirectionally degrades single-stranded DNA into large acid-insoluble oligonucleotides, which are then degraded further into small acid-soluble oligonucleotides. This chain is Exodeoxyribonuclease 7 large subunit, found in Bacillus cereus (strain G9842).